The primary structure comprises 1199 residues: DNA-directed RNA polymerase subunit beta (1199 aa).

The interval 1175–1199 (EEKKAHEAAAQATDGKSANSTDDKK) is disordered. The span at 1188-1199 (DGKSANSTDDKK) shows a compositional bias: polar residues.

The protein belongs to the RNA polymerase beta chain family. The RNAP catalytic core consists of 2 alpha, 1 beta, 1 beta' and 1 omega subunit. When a sigma factor is associated with the core the holoenzyme is formed, which can initiate transcription.

It carries out the reaction RNA(n) + a ribonucleoside 5'-triphosphate = RNA(n+1) + diphosphate. Its function is as follows. DNA-dependent RNA polymerase catalyzes the transcription of DNA into RNA using the four ribonucleoside triphosphates as substrates. The sequence is that of DNA-directed RNA polymerase subunit beta from Lacticaseibacillus paracasei (strain ATCC 334 / BCRC 17002 / CCUG 31169 / CIP 107868 / KCTC 3260 / NRRL B-441) (Lactobacillus paracasei).